A 1230-amino-acid chain; its full sequence is Cullin-associated NEDD8-dissociated protein 1 (1230 aa).

At A2 the chain carries N-acetylalanine. HEAT repeat units lie at residues 2–39 (ASAS…KDSI), 44–81 (DSER…KVKE), 83–119 (QVET…ELPP), 131–165 (CKKI…LSRQ), 171–208 (NFHP…SCGN), 210–247 (VFVD…QAGH), 248–282 (RIGE…FESF), 289–366 (EVYP…TRHE), 370–407 (EFYK…QTRP), 424–467 (PLTM…VLPG), 471–510 (QHIP…NHSP), and 515–552 (PHVQ…VIRP). Residue K55 is modified to N6-acetyllysine. The disordered stretch occupies residues 315–344 (DEDEDENAMDADGGDDDDQGSDDEYSDDDD). Position 335 is a phosphoserine (S335). S558 is modified (phosphoserine). HEAT repeat units lie at residues 563–602 (PYIK…NLGD), 606–643 (SDLP…LKID), 646–683 (PVLG…NYSD), 688–725 (AMID…VYPS), 729–768 (KISG…TGTN), 770–808 (LGYM…ALTR), 809–845 (ACPK…LGEV), 852–889 (SGQL…GNLP), 890–927 (EYLP…GLKP), 928–960 (YVEN…KLTL), 961–998 (IDPE…DHPQ), 1002–1039 (PLLK…NKPS), 1043–1097 (DLLD…DSCL), 1099–1133 (RLDI…LSTL), and 1140–1189 (QRLD…IPEA). K971 carries the N6-acetyllysine modification.

Belongs to the CAND family. Interacts with TBP. Part of a complex that contains CUL1 and RBX1. Interacts with unneddylated cullins: interacts with CUL1, CUL2, CUL3, CUL4A, CUL4B and CUL5. Does not bind neddylated CUL1. Interaction with cullins is abolished in presence of COMMD1, which antagonizes with CAND1 for interacting with cullins. Interacts with ERCC6. Interacts with DCUN1D1, DCUN1D2, DCUN1D3, DCUN1D4 and DCUN1D5; these interactions are bridged by cullins and strongly inhibits the neddylation of cullins.

The protein resides in the cytoplasm. It localises to the nucleus. Key assembly factor of SCF (SKP1-CUL1-F-box protein) E3 ubiquitin ligase complexes that promotes the exchange of the substrate-recognition F-box subunit in SCF complexes, thereby playing a key role in the cellular repertoire of SCF complexes. Acts as a F-box protein exchange factor. The exchange activity of CAND1 is coupled with cycles of neddylation conjugation: in the deneddylated state, cullin-binding CAND1 binds CUL1-RBX1, increasing dissociation of the SCF complex and promoting exchange of the F-box protein. Probably plays a similar role in other cullin-RING E3 ubiquitin ligase complexes. In Bos taurus (Bovine), this protein is Cullin-associated NEDD8-dissociated protein 1 (CAND1).